Reading from the N-terminus, the 264-residue chain is Thymidylate synthase (264 aa).

Arg21 serves as a coordination point for dUMP. His51 lines the (6R)-5,10-methylene-5,6,7,8-tetrahydrofolate pocket. A dUMP-binding site is contributed by 126 to 127 (RR). Cys146 acts as the Nucleophile in catalysis. Residues 166-169 (RSCD), Asn177, and 207-209 (HLY) contribute to the dUMP site. Position 169 (Asp169) interacts with (6R)-5,10-methylene-5,6,7,8-tetrahydrofolate. (6R)-5,10-methylene-5,6,7,8-tetrahydrofolate is bound at residue Ala263.

The protein belongs to the thymidylate synthase family. Bacterial-type ThyA subfamily. Homodimer.

Its subcellular location is the cytoplasm. The catalysed reaction is dUMP + (6R)-5,10-methylene-5,6,7,8-tetrahydrofolate = 7,8-dihydrofolate + dTMP. It functions in the pathway pyrimidine metabolism; dTTP biosynthesis. Its function is as follows. Catalyzes the reductive methylation of 2'-deoxyuridine-5'-monophosphate (dUMP) to 2'-deoxythymidine-5'-monophosphate (dTMP) while utilizing 5,10-methylenetetrahydrofolate (mTHF) as the methyl donor and reductant in the reaction, yielding dihydrofolate (DHF) as a by-product. This enzymatic reaction provides an intracellular de novo source of dTMP, an essential precursor for DNA biosynthesis. In Shigella boydii serotype 4 (strain Sb227), this protein is Thymidylate synthase.